The chain runs to 393 residues: Formate-dependent phosphoribosylglycinamide formyltransferase (393 aa).

N(1)-(5-phospho-beta-D-ribosyl)glycinamide is bound by residues Glu22–Leu23 and Glu82. Residues Arg114, Lys155, Ser160–Gln165, Glu195–Ile198, and Glu203 each bind ATP. The ATP-grasp domain maps to Arg119–Leu308. Mg(2+)-binding residues include Glu267 and Glu279. N(1)-(5-phospho-beta-D-ribosyl)glycinamide is bound by residues Asp286, Lys356, and Arg363 to Arg364.

The protein belongs to the PurK/PurT family. As to quaternary structure, homodimer.

The catalysed reaction is N(1)-(5-phospho-beta-D-ribosyl)glycinamide + formate + ATP = N(2)-formyl-N(1)-(5-phospho-beta-D-ribosyl)glycinamide + ADP + phosphate + H(+). It participates in purine metabolism; IMP biosynthesis via de novo pathway; N(2)-formyl-N(1)-(5-phospho-D-ribosyl)glycinamide from N(1)-(5-phospho-D-ribosyl)glycinamide (formate route): step 1/1. Its function is as follows. Involved in the de novo purine biosynthesis. Catalyzes the transfer of formate to 5-phospho-ribosyl-glycinamide (GAR), producing 5-phospho-ribosyl-N-formylglycinamide (FGAR). Formate is provided by PurU via hydrolysis of 10-formyl-tetrahydrofolate. This Haemophilus ducreyi (strain 35000HP / ATCC 700724) protein is Formate-dependent phosphoribosylglycinamide formyltransferase.